The primary structure comprises 259 residues: Proteasome subunit alpha (259 aa).

The tract at residues 222–259 is disordered; it reads RITGPALEQLIPAEPAPASEPAPESKPDTETKPADPQD. Residues 244–259 show a composition bias toward basic and acidic residues; the sequence is PESKPDTETKPADPQD.

It belongs to the peptidase T1A family. As to quaternary structure, the 20S proteasome core is composed of 14 alpha and 14 beta subunits that assemble into four stacked heptameric rings, resulting in a barrel-shaped structure. The two inner rings, each composed of seven catalytic beta subunits, are sandwiched by two outer rings, each composed of seven alpha subunits. The catalytic chamber with the active sites is on the inside of the barrel. Has a gated structure, the ends of the cylinder being occluded by the N-termini of the alpha-subunits. Is capped by the proteasome-associated ATPase, ARC.

Its subcellular location is the cytoplasm. It functions in the pathway protein degradation; proteasomal Pup-dependent pathway. With respect to regulation, the formation of the proteasomal ATPase ARC-20S proteasome complex, likely via the docking of the C-termini of ARC into the intersubunit pockets in the alpha-rings, may trigger opening of the gate for substrate entry. Interconversion between the open-gate and close-gate conformations leads to a dynamic regulation of the 20S proteasome proteolysis activity. In terms of biological role, component of the proteasome core, a large protease complex with broad specificity involved in protein degradation. In Rhodococcus jostii (strain RHA1), this protein is Proteasome subunit alpha.